The primary structure comprises 86 residues: MKNLIAELLLKLAQKEEESKELVAQVEALEIIVTAMLRNMAQSEQQMLIRQVEGALEGVKPDASVPDHDTELLRQYVKKLLRHPRH.

The stretch at 1–47 forms a coiled coil; it reads MKNLIAELLLKLAQKEEESKELVAQVEALEIIVTAMLRNMAQSEQQM.

The protein belongs to the IraP family. As to quaternary structure, interacts with RssB.

It is found in the cytoplasm. Its function is as follows. Inhibits RpoS proteolysis by regulating RssB activity, thereby increasing the stability of the sigma stress factor RpoS especially during phosphate and magnesium starvation, but also in stationary phase and during nitrogen starvation. Its effect on RpoS stability is due to its interaction with RssB, which probably blocks the interaction of RssB with RpoS, and the consequent delivery of the RssB-RpoS complex to the ClpXP protein degradation pathway. This is Anti-adapter protein IraP from Salmonella arizonae (strain ATCC BAA-731 / CDC346-86 / RSK2980).